The primary structure comprises 193 residues: MLQITNMATPFLLLLLPLIFSTVLLLTITVTQSKPYSKTTPFQGNKPDKLTHLHFYFHDIISGDKPTTIRVAEAPGTNSSATVFGAVLIVDAPVTEGPELSSKEVGRAQGLYASTDMKTFGFTMVFNFVFTEGEFNGSTAALYGRNPILLEERELPIIGGTGDFRFARGYALPKTYKVVNIDAVVEYNVFIWH.

Positions 1–33 (MLQITNMATPFLLLLLPLIFSTVLLLTITVTQS) are cleaved as a signal peptide. N-linked (GlcNAc...) asparagine glycosylation is found at Asn78 and Asn136.

Belongs to the plant dirigent protein family. Homodimer.

The protein resides in the secreted. It localises to the extracellular space. It is found in the apoplast. Its function is as follows. Dirigent proteins impart stereoselectivity on the phenoxy radical-coupling reaction, yielding optically active lignans from two molecules of coniferyl alcohol in the biosynthesis of lignans, flavonolignans, and alkaloids and thus plays a central role in plant secondary metabolism. The sequence is that of Dirigent protein 11 (DIR11) from Arabidopsis thaliana (Mouse-ear cress).